Consider the following 129-residue polypeptide: Cytochrome b5 (129 aa).

Residues 8-84 enclose the Cytochrome b5 heme-binding domain; it reads TTIYTHEEVA…LEKLYIGNLK (77 aa). Positions 43 and 67 each coordinate heme. Residues 104 to 124 traverse the membrane as a helical segment; the sequence is GINFPLIAVGVFLAAFGVYYY.

This sequence belongs to the cytochrome b5 family.

The protein resides in the endoplasmic reticulum membrane. It is found in the microsome membrane. In terms of biological role, membrane bound hemoprotein which function as an electron carrier for several membrane bound oxygenases. This Candida tropicalis (Yeast) protein is Cytochrome b5 (Cytb5).